An 862-amino-acid polypeptide reads, in one-letter code: DNA mismatch repair protein MutS (862 aa).

618–625 (GPNMGGKS) contributes to the ATP binding site. Residues 799–824 (QLESRDNQASPAVASAPQQQSLSLSP) are disordered. The segment covering 806–824 (QASPAVASAPQQQSLSLSP) has biased composition (low complexity).

The protein belongs to the DNA mismatch repair MutS family.

In terms of biological role, this protein is involved in the repair of mismatches in DNA. It is possible that it carries out the mismatch recognition step. This protein has a weak ATPase activity. This Shewanella denitrificans (strain OS217 / ATCC BAA-1090 / DSM 15013) protein is DNA mismatch repair protein MutS.